Reading from the N-terminus, the 170-residue chain is Acetyl-CoA decarbonylase/synthase complex subunit epsilon 1 (170 aa).

It belongs to the CdhB family. Heterotetramer of two alpha and two epsilon subunits. The ACDS complex is made up of alpha, epsilon, beta, gamma and delta subunits with a probable stoichiometry of (alpha(2)epsilon(2))(4)-beta(8)-(gamma(1)delta(1))(8).

Its pathway is one-carbon metabolism; methanogenesis from acetate. In terms of biological role, part of a complex that catalyzes the reversible cleavage of acetyl-CoA, allowing growth on acetate as sole source of carbon and energy. The alpha-epsilon subcomponent functions as a carbon monoxide dehydrogenase. The precise role of the epsilon subunit is unclear; it may have a stabilizing role within the alpha(2)epsilon(2) component and/or be involved in electron transfer to FAD during a potential FAD-mediated CO oxidation. The sequence is that of Acetyl-CoA decarbonylase/synthase complex subunit epsilon 1 (cdhB1) from Methanosarcina thermophila.